The sequence spans 164 residues: Endoribonuclease YbeY (164 aa).

Residues His-125, His-129, and His-135 each contribute to the Zn(2+) site.

Belongs to the endoribonuclease YbeY family. Requires Zn(2+) as cofactor.

It localises to the cytoplasm. Single strand-specific metallo-endoribonuclease involved in late-stage 70S ribosome quality control and in maturation of the 3' terminus of the 16S rRNA. The sequence is that of Endoribonuclease YbeY from Paramagnetospirillum magneticum (strain ATCC 700264 / AMB-1) (Magnetospirillum magneticum).